The following is a 171-amino-acid chain: Transcription antitermination protein NusB (171 aa).

Belongs to the NusB family.

Involved in transcription antitermination. Required for transcription of ribosomal RNA (rRNA) genes. Binds specifically to the boxA antiterminator sequence of the ribosomal RNA (rrn) operons. The polypeptide is Transcription antitermination protein NusB (Brucella ovis (strain ATCC 25840 / 63/290 / NCTC 10512)).